A 428-amino-acid chain; its full sequence is Gamma-glutamyl phosphate reductase (428 aa).

It belongs to the gamma-glutamyl phosphate reductase family.

It localises to the cytoplasm. It carries out the reaction L-glutamate 5-semialdehyde + phosphate + NADP(+) = L-glutamyl 5-phosphate + NADPH + H(+). It functions in the pathway amino-acid biosynthesis; L-proline biosynthesis; L-glutamate 5-semialdehyde from L-glutamate: step 2/2. In terms of biological role, catalyzes the NADPH-dependent reduction of L-glutamate 5-phosphate into L-glutamate 5-semialdehyde and phosphate. The product spontaneously undergoes cyclization to form 1-pyrroline-5-carboxylate. The chain is Gamma-glutamyl phosphate reductase from Chelativorans sp. (strain BNC1).